A 305-amino-acid chain; its full sequence is Probable L-ribulose-5-phosphate 3-epimerase UlaE (305 aa).

Belongs to the L-ribulose-5-phosphate 3-epimerase family.

The catalysed reaction is L-ribulose 5-phosphate = L-xylulose 5-phosphate. The protein operates within cofactor degradation; L-ascorbate degradation; D-xylulose 5-phosphate from L-ascorbate: step 3/4. Catalyzes the isomerization of L-xylulose-5-phosphate to L-ribulose-5-phosphate. Is involved in the anaerobic L-ascorbate utilization. This chain is Probable L-ribulose-5-phosphate 3-epimerase UlaE (ulaE), found in Mycoplasma pneumoniae (strain ATCC 29342 / M129 / Subtype 1) (Mycoplasmoides pneumoniae).